Here is a 159-residue protein sequence, read N- to C-terminus: 2-C-methyl-D-erythritol 2,4-cyclodiphosphate synthase (159 aa).

D8 and H10 together coordinate a divalent metal cation. 4-CDP-2-C-methyl-D-erythritol 2-phosphate-binding positions include 8-10 (DVH) and 34-35 (HS). Residue H42 coordinates a divalent metal cation. Residues 56 to 58 (DIG), 61 to 65 (FPDTD), 132 to 135 (TTTE), F139, and R142 each bind 4-CDP-2-C-methyl-D-erythritol 2-phosphate.

Belongs to the IspF family. In terms of assembly, homotrimer. It depends on a divalent metal cation as a cofactor.

It catalyses the reaction 4-CDP-2-C-methyl-D-erythritol 2-phosphate = 2-C-methyl-D-erythritol 2,4-cyclic diphosphate + CMP. Its pathway is isoprenoid biosynthesis; isopentenyl diphosphate biosynthesis via DXP pathway; isopentenyl diphosphate from 1-deoxy-D-xylulose 5-phosphate: step 4/6. Functionally, involved in the biosynthesis of isopentenyl diphosphate (IPP) and dimethylallyl diphosphate (DMAPP), two major building blocks of isoprenoid compounds. Catalyzes the conversion of 4-diphosphocytidyl-2-C-methyl-D-erythritol 2-phosphate (CDP-ME2P) to 2-C-methyl-D-erythritol 2,4-cyclodiphosphate (ME-CPP) with a corresponding release of cytidine 5-monophosphate (CMP). The polypeptide is 2-C-methyl-D-erythritol 2,4-cyclodiphosphate synthase (Syntrophobacter fumaroxidans (strain DSM 10017 / MPOB)).